The chain runs to 320 residues: Acetyl-coenzyme A carboxylase carboxyl transferase subunit alpha (320 aa).

The 254-residue stretch at 42–295 folds into the CoA carboxyltransferase C-terminal domain; that stretch reads IEDKAKAALH…GDAIAQAFSD (254 aa).

The protein belongs to the AccA family. In terms of assembly, acetyl-CoA carboxylase is a heterohexamer composed of biotin carboxyl carrier protein (AccB), biotin carboxylase (AccC) and two subunits each of ACCase subunit alpha (AccA) and ACCase subunit beta (AccD).

The protein localises to the cytoplasm. The catalysed reaction is N(6)-carboxybiotinyl-L-lysyl-[protein] + acetyl-CoA = N(6)-biotinyl-L-lysyl-[protein] + malonyl-CoA. It participates in lipid metabolism; malonyl-CoA biosynthesis; malonyl-CoA from acetyl-CoA: step 1/1. In terms of biological role, component of the acetyl coenzyme A carboxylase (ACC) complex. First, biotin carboxylase catalyzes the carboxylation of biotin on its carrier protein (BCCP) and then the CO(2) group is transferred by the carboxyltransferase to acetyl-CoA to form malonyl-CoA. The chain is Acetyl-coenzyme A carboxylase carboxyl transferase subunit alpha from Afipia carboxidovorans (strain ATCC 49405 / DSM 1227 / KCTC 32145 / OM5) (Oligotropha carboxidovorans).